The chain runs to 225 residues: Cell division protein SepF (225 aa).

A disordered region spans residues 22-116 (EYLDEPEPAR…TRGALAVDTR (95 aa)). Composition is skewed to basic and acidic residues over residues 28-54 (EPARRPARPARDSGRDPYLDRDDRDFA) and 77-86 (RYDGPRHSSR).

This sequence belongs to the SepF family. In terms of assembly, homodimer. Interacts with FtsZ.

The protein localises to the cytoplasm. Functionally, cell division protein that is part of the divisome complex and is recruited early to the Z-ring. Probably stimulates Z-ring formation, perhaps through the cross-linking of FtsZ protofilaments. Its function overlaps with FtsA. The sequence is that of Cell division protein SepF from Rhodococcus jostii (strain RHA1).